A 548-amino-acid polypeptide reads, in one-letter code: MDEQIVSASSNVKDGVEKQPVKDREDVDANVVPPHSTPSLPKISLISLFSIVMSLGAAAFLGALDATVVAVLTPTLAQEFHSVDAVAWYGAIYLLMSGTTQPLFGKLYNEFSPKWLFITCLIVLQLGSLVCALARNSPTFIVGRAVAGIGAGGILSGALNIVALIVPLHHRAAFTGMIGALECVALIIGPIIGGAIADNIGWRWCFWINLPIGAAVCAILLFFFHPPRSTYSASGVPRSYSEILGNLDYIGAGMIISSLVCLSLALQWGGTKYKWGDGRVVALLVVFGVLFLSASGHQYWKGEKALFPTRLLRQRGFLLSLFNGLCFGGVQYAALYYLPTWFQAIKGETRVGAGIQMLPIVGAIIGVNIVAGITISFTGRLAPFIVIATVLASVGSGLLYTFTPTKSQARIIGYQLIYGAGSGAGVQQAFIGAQAALDPADVTYASASVLLMNSMSGVITLCVCQNLFTNRINALTEVLPGVTKETLQSGFAFLRSTLTPAEFGVAIQTFNSAIQDAFLVAIVLSCASVLGWPFLSWASVKGQKKMNK.

Over residues 1–12 (MDEQIVSASSNV) the composition is skewed to polar residues. Residues 1 to 33 (MDEQIVSASSNVKDGVEKQPVKDREDVDANVVP) form a disordered region. Positions 14-27 (DGVEKQPVKDREDV) are enriched in basic and acidic residues. A run of 14 helical transmembrane segments spans residues 43 to 63 (ISLI…FLGA), 85 to 105 (AVAW…PLFG), 114 to 134 (KWLF…CALA), 146 to 166 (VAGI…ALIV), 177 to 197 (MIGA…GAIA), 204 to 224 (WCFW…LFFF), 250 to 270 (IGAG…QWGG), 280 to 300 (VVAL…HQYW), 316 to 336 (GFLL…AALY), 357 to 377 (MLPI…TISF), 382 to 402 (APFI…LYTF), 411 to 431 (IIGY…QAFI), 444 to 464 (YASA…LCVC), and 518 to 538 (FLVA…LSWA).

This sequence belongs to the major facilitator superfamily. TCR/Tet family.

It localises to the membrane. Functionally, MFS-type transporter; part of the diffuse TOX2 gene cluster that mediates the biosynthesis of the HC-toxin, cyclic tetrapeptide of structure cyclo(D-Pro-L-Ala-D-Ala-L-Aeo), where Aeo stands for 2-amino-9,10-epoxi-8-oxodecanoic acid. HC-toxin is a determinant of specificity and virulence in the interaction between the producing fungus and its host, maize. TOXA acts as a HC-toxin efflux pump which contributes to self-protection against HC-toxin and/or the secretion of HC-toxin into the extracellular milieu. The sequence is that of MFS-type transporter TOXA from Cochliobolus carbonum (Maize leaf spot fungus).